Reading from the N-terminus, the 360-residue chain is Peptide chain release factor 1 (360 aa).

Residue Gln-237 is modified to N5-methylglutamine.

Belongs to the prokaryotic/mitochondrial release factor family. In terms of processing, methylated by PrmC. Methylation increases the termination efficiency of RF1.

It localises to the cytoplasm. In terms of biological role, peptide chain release factor 1 directs the termination of translation in response to the peptide chain termination codons UAG and UAA. The polypeptide is Peptide chain release factor 1 (Teredinibacter turnerae (strain ATCC 39867 / T7901)).